The chain runs to 547 residues: Ribosome protection protein VmlR (547 aa).

In terms of domain architecture, ABC transporter 1 spans V5 to Q200. G37–S44 lines the ATP pocket. Positions G183–K289 are antibiotic resistance domain (ARD). Coiled coils occupy residues E193 to S222 and A245 to E269. One can recognise an ABC transporter 2 domain in the interval L292–T504. G324–T331 is a binding site for ATP. The tract at residues K483 to D547 is C-terminal extension (CTE). Residues V488 to Q543 are a coiled coil.

The protein belongs to the ABC transporter superfamily. ABCF family. ARE2 subfamily. In terms of assembly, binds within the E-site of the 70S ribosome, where it contacts ribosomal proteins L1, L5, L33-1, S7, S11, the 16 and 23S rRNAs and the acceptor arm of the P-site tRNA.

Its subcellular location is the cytoplasm. Its function is as follows. Recognizes and binds in the vacant E-site of ribosomes stalled by some peptidyltransferase center (PTC)-targeting antibiotics. Makes contact with the PTC and both ribosomal subunits. Induces conformational changes in the P-site, which allows it to dislodge the antibiotic from its PTC binding site. Binds to ribosomes either directly following translation initation or subsequent to E tRNA release during elongation. Involved in resistance to a narrow spectrum of antibiotics (the streptogramin A antibiotic virginiamycin M, the lincosamide antibiotic lincomycin and the pleuromutilin antibiotic tiamulin). The protein is Ribosome protection protein VmlR of Bacillus subtilis (strain 168).